The sequence spans 192 residues: GTP-dependent dephospho-CoA kinase (192 aa).

GTP is bound by residues Asp49, Val50, Val51, Asp68, Lys70, and Glu127.

This sequence belongs to the GTP-dependent DPCK family.

The enzyme catalyses 3'-dephospho-CoA + GTP = GDP + CoA + H(+). The protein operates within cofactor biosynthesis; coenzyme A biosynthesis. In terms of biological role, catalyzes the GTP-dependent phosphorylation of the 3'-hydroxyl group of dephosphocoenzyme A to form coenzyme A (CoA). This Halorubrum lacusprofundi (strain ATCC 49239 / DSM 5036 / JCM 8891 / ACAM 34) protein is GTP-dependent dephospho-CoA kinase.